We begin with the raw amino-acid sequence, 138 residues long: Small ribosomal subunit protein uS11c (138 aa).

Belongs to the universal ribosomal protein uS11 family. Part of the 30S ribosomal subunit.

Its subcellular location is the plastid. It is found in the chloroplast. This chain is Small ribosomal subunit protein uS11c, found in Acorus calamus (Sweet flag).